A 742-amino-acid polypeptide reads, in one-letter code: Envelope glycoprotein H (742 aa).

An N-terminal signal peptide occupies residues 1 to 23 (MRPGLPSYLIILAVCLFSHLLSS). The Virion surface segment spans residues 24–719 (RYGAEAVSEP…VVDATDSRLL (696 aa)). N-linked (GlcNAc...) asparagine; by host glycans are attached at residues asparagine 55, asparagine 62, asparagine 67, and asparagine 192. A disulfide bridge links cysteine 195 with cysteine 211. Residues 217–280 (YLIDELRYVK…QTEKHELLVL (64 aa)) form an interaction with gL region. Cystine bridges form between cysteine 330/cysteine 383, cysteine 495/cysteine 522, and cysteine 571/cysteine 624. Asparagine 641 and asparagine 700 each carry an N-linked (GlcNAc...) asparagine; by host glycan. A helical transmembrane segment spans residues 720 to 740 (MMSVYALSAIIGIYLLYRMLK). Residues 741 to 742 (TC) lie on the Intravirion side of the membrane.

It belongs to the herpesviridae glycoprotein H family. As to quaternary structure, interacts with glycoprotein L (gL); this interaction is necessary for the correct processing and cell surface expression of gH. The heterodimer gH/gL seems to interact with gB trimers during fusion. Forms the envelope pentamer complex (PC) composed of gH, gL, UL128, UL130, and UL131A. The pentamer interacts with host NRP2. Forms the envelope trimer complex composed of gH, gL, and gO. The trimer interacts with host PDGFRA. The trimer also interacts with host EPHA2. The trimer also interacts with host TGFBR3. Interacts with UL116. In terms of processing, N-glycosylated, O-glycosylated, and sialylated.

Its subcellular location is the virion membrane. It localises to the host cell membrane. The protein localises to the host endosome membrane. Its function is as follows. The heterodimer glycoprotein H-glycoprotein L is required for the fusion of viral and plasma membranes leading to virus entry into the host cell. Following initial binding to host receptor, membrane fusion is mediated by the fusion machinery composed of gB and the heterodimer gH/gL. May also be involved in the fusion between the virion envelope and the outer nuclear membrane during virion morphogenesis. In human cytomegalovirus, forms two distincts complexes to mediate viral entry, a trimer and a pentamer at the surface of the virion envelope. The gH-gL-gO trimer is required for infection in fibroblasts by interacting with host PDGFRA, and in glioblastoma cells by interacting with host EPHA2. Thsi trimer may also be required in other cell types using host TGFBR3. The gH-gL-UL128-UL130-UL131A pentamer is essential for viral entry in epithelial, endothelial and myeloid cells via interaction with host NRP2. The sequence is that of Envelope glycoprotein H from Human cytomegalovirus (strain Merlin) (HHV-5).